The chain runs to 704 residues: Polyribonucleotide nucleotidyltransferase (704 aa).

Mg(2+) contacts are provided by D488 and D494. The 60-residue stretch at 555–614 (PRITTIKINPEKIRDVIGKGGATIRALTEETGTTIELDDDGTVKIASSNGEATKEAIRRI) folds into the KH domain. One can recognise an S1 motif domain in the interval 624 to 692 (GTVYNGKVVR…RQGRVRLSMK (69 aa)).

This sequence belongs to the polyribonucleotide nucleotidyltransferase family. As to quaternary structure, component of the RNA degradosome, which is a multiprotein complex involved in RNA processing and mRNA degradation. It depends on Mg(2+) as a cofactor.

The protein localises to the cytoplasm. It carries out the reaction RNA(n+1) + phosphate = RNA(n) + a ribonucleoside 5'-diphosphate. In terms of biological role, involved in mRNA degradation. Catalyzes the phosphorolysis of single-stranded polyribonucleotides processively in the 3'- to 5'-direction. This Shewanella halifaxensis (strain HAW-EB4) protein is Polyribonucleotide nucleotidyltransferase.